Reading from the N-terminus, the 344-residue chain is Adenine deaminase (344 aa).

3 residues coordinate Zn(2+): H24, H26, and H204. The Proton donor role is filled by E207. D285 lines the Zn(2+) pocket. D286 lines the substrate pocket.

This sequence belongs to the metallo-dependent hydrolases superfamily. Adenosine and AMP deaminases family. Adenine deaminase type 2 subfamily. Requires Zn(2+) as cofactor.

The enzyme catalyses adenine + H2O + H(+) = hypoxanthine + NH4(+). Catalyzes the hydrolytic deamination of adenine to hypoxanthine. Plays an important role in the purine salvage pathway and in nitrogen catabolism. This Caulobacter vibrioides (strain ATCC 19089 / CIP 103742 / CB 15) (Caulobacter crescentus) protein is Adenine deaminase.